Reading from the N-terminus, the 363-residue chain is NAD(P)H-quinone oxidoreductase subunit 1, chloroplastic (363 aa).

A run of 6 helical transmembrane segments spans residues 30–50 (LIPI…IVWL), 104–124 (IAVI…HLVL), 127–147 (LSIG…GLLM), 248–268 (YSGI…LVSS), 300–320 (VFGT…FLFI), and 343–363 (FLLP…LISL).

It belongs to the complex I subunit 1 family. NDH is composed of at least 16 different subunits, 5 of which are encoded in the nucleus.

The protein localises to the plastid. The protein resides in the chloroplast thylakoid membrane. It carries out the reaction a plastoquinone + NADH + (n+1) H(+)(in) = a plastoquinol + NAD(+) + n H(+)(out). The catalysed reaction is a plastoquinone + NADPH + (n+1) H(+)(in) = a plastoquinol + NADP(+) + n H(+)(out). NDH shuttles electrons from NAD(P)H:plastoquinone, via FMN and iron-sulfur (Fe-S) centers, to quinones in the photosynthetic chain and possibly in a chloroplast respiratory chain. The immediate electron acceptor for the enzyme in this species is believed to be plastoquinone. Couples the redox reaction to proton translocation, and thus conserves the redox energy in a proton gradient. This is NAD(P)H-quinone oxidoreductase subunit 1, chloroplastic from Lactuca sativa (Garden lettuce).